Here is a 37-residue protein sequence, read N- to C-terminus: uncharacterized protein (37 aa).

The chain crosses the membrane as a helical span at residues 16–36; the sequence is FALIVVLFILLIIVGTAFVGG.

Belongs to the SscA family.

Its subcellular location is the membrane. This is an uncharacterized protein from Bacillus subtilis (strain 168).